Consider the following 258-residue polypeptide: Probable parvulin-type peptidyl-prolyl cis-trans isomerase (258 aa).

A signal peptide spans 1–19 (MKRIAMLAAACVIAVPAFA). Residues 127-219 (KMEYKVRHIL…FGWHVIQVDD (93 aa)) enclose the PpiC domain. Over residues 158–175 (DDLAKKNSKDPGSAERGG) the composition is skewed to basic and acidic residues. The segment at 158–178 (DDLAKKNSKDPGSAERGGDLG) is disordered.

The protein belongs to the PpiC/parvulin rotamase family.

It carries out the reaction [protein]-peptidylproline (omega=180) = [protein]-peptidylproline (omega=0). The chain is Probable parvulin-type peptidyl-prolyl cis-trans isomerase from Bordetella bronchiseptica (strain ATCC BAA-588 / NCTC 13252 / RB50) (Alcaligenes bronchisepticus).